Here is a 119-residue protein sequence, read N- to C-terminus: Large ribosomal subunit protein uL18 (119 aa).

Belongs to the universal ribosomal protein uL18 family. As to quaternary structure, part of the 50S ribosomal subunit; part of the 5S rRNA/L5/L18/L25 subcomplex. Contacts the 5S and 23S rRNAs.

Its function is as follows. This is one of the proteins that bind and probably mediate the attachment of the 5S RNA into the large ribosomal subunit, where it forms part of the central protuberance. This is Large ribosomal subunit protein uL18 from Paracoccus denitrificans (strain Pd 1222).